Consider the following 29-residue polypeptide: Cyclotide vibi-B (29 aa).

Positions 1 to 29 form a cross-link, cyclopeptide (Gly-Asn); the sequence is GLPVCGETCFGGTCNTPGCTCSYPICTRN. Intrachain disulfides connect cysteine 5–cysteine 19, cysteine 9–cysteine 21, and cysteine 14–cysteine 26.

Post-translationally, this is a cyclic peptide.

Its function is as follows. Probably participates in a plant defense mechanism. This Viola biflora (Yellow wood violet) protein is Cyclotide vibi-B.